We begin with the raw amino-acid sequence, 387 residues long: Alkanesulfonate monooxygenase (387 aa).

The protein belongs to the SsuD family.

It catalyses the reaction an alkanesulfonate + FMNH2 + O2 = an aldehyde + FMN + sulfite + H2O + 2 H(+). Its function is as follows. Catalyzes the desulfonation of aliphatic sulfonates. This is Alkanesulfonate monooxygenase from Xanthomonas axonopodis pv. citri (strain 306).